The sequence spans 191 residues: NADH-quinone oxidoreductase subunit B 2 (191 aa).

[4Fe-4S] cluster is bound by residues C69, C70, C134, and C164.

This sequence belongs to the complex I 20 kDa subunit family. As to quaternary structure, NDH-1 is composed of 14 different subunits. Subunits NuoB, C, D, E, F, and G constitute the peripheral sector of the complex. It depends on [4Fe-4S] cluster as a cofactor.

Its subcellular location is the cell inner membrane. The enzyme catalyses a quinone + NADH + 5 H(+)(in) = a quinol + NAD(+) + 4 H(+)(out). Functionally, NDH-1 shuttles electrons from NADH, via FMN and iron-sulfur (Fe-S) centers, to quinones in the respiratory chain. Couples the redox reaction to proton translocation (for every two electrons transferred, four hydrogen ions are translocated across the cytoplasmic membrane), and thus conserves the redox energy in a proton gradient. The sequence is that of NADH-quinone oxidoreductase subunit B 2 from Gluconacetobacter diazotrophicus (strain ATCC 49037 / DSM 5601 / CCUG 37298 / CIP 103539 / LMG 7603 / PAl5).